Consider the following 376-residue polypeptide: Transcription factor TEOSINTE BRANCHED 1 (376 aa).

The 59-residue stretch at 114 to 172 folds into the TCP domain; sequence RKDRHSKICTAGGMRDRRMRLSLDVARKFFALQDMLGFDKASKTVQWLLNTSKSAIQEI. Disordered stretches follow at residues 179 to 266 and 280 to 299; these read SECV…KHRM and AAAS…HHSS. 2 stretches are compositionally biased toward basic and acidic residues: residues 207–219 and 243–261; these read QKPK…EGKK and VPDK…ERTK. Residues 246-263 form the R domain; that stretch reads KETRAKARERARERTKEK. Residues 290–299 show a composition bias toward low complexity; the sequence is SSNNLSHHSS.

As to expression, expressed in axillary inflorescence primordia, immature internodes below these primordia, and immature husk surrounding these primordia.

It is found in the nucleus. Functionally, transcription factor. Involved in apical dominance. Represses the growth of axillary organs (e.g. lateral branches), but enables the formation of female inflorescences. Regulates the number and length of axillary branches. This Zea mays (Maize) protein is Transcription factor TEOSINTE BRANCHED 1 (TB1).